Consider the following 453-residue polypeptide: Ribose 1,5-bisphosphate phosphokinase PhnN (453 aa).

Positions 1–21 (MHGSTGFVQGTRPAGDQADPL) are disordered. The interval 1 to 271 (MHGSTGFVQG…SGQGERASLP (271 aa)) is unknown. Residues 272–453 (HSGRIFFCVG…KLLDILRQAK (182 aa)) form a ribose 1,5-bisphosphokinase region.

In the C-terminal section; belongs to the ribose 1,5-bisphosphokinase family.

The catalysed reaction is alpha-D-ribose 1,5-bisphosphate + ATP = 5-phospho-alpha-D-ribose 1-diphosphate + ADP. It functions in the pathway metabolic intermediate biosynthesis; 5-phospho-alpha-D-ribose 1-diphosphate biosynthesis; 5-phospho-alpha-D-ribose 1-diphosphate from D-ribose 5-phosphate (route II): step 3/3. Functionally, catalyzes the phosphorylation of ribose 1,5-bisphosphate to 5-phospho-D-ribosyl alpha-1-diphosphate (PRPP). This Janthinobacterium sp. (strain Marseille) (Minibacterium massiliensis) protein is Ribose 1,5-bisphosphate phosphokinase PhnN (phnN).